A 498-amino-acid polypeptide reads, in one-letter code: Acetyl-coenzyme A carboxylase carboxyl transferase subunit beta, chloroplastic (498 aa).

The 271-residue stretch at 228–498 folds into the CoA carboxyltransferase N-terminal domain; that stretch reads LWVQCEICYG…LNHNLSRTLT (271 aa). Residues C232, C235, C251, and C254 each coordinate Zn(2+). The C4-type zinc-finger motif lies at 232–254; sequence CEICYGLNYKKFFKSKMNICEQC.

The protein belongs to the AccD/PCCB family. Acetyl-CoA carboxylase is a heterohexamer composed of biotin carboxyl carrier protein, biotin carboxylase and 2 subunits each of ACCase subunit alpha and ACCase plastid-coded subunit beta (accD). It depends on Zn(2+) as a cofactor.

Its subcellular location is the plastid. It is found in the chloroplast stroma. It catalyses the reaction N(6)-carboxybiotinyl-L-lysyl-[protein] + acetyl-CoA = N(6)-biotinyl-L-lysyl-[protein] + malonyl-CoA. It functions in the pathway lipid metabolism; malonyl-CoA biosynthesis; malonyl-CoA from acetyl-CoA: step 1/1. Component of the acetyl coenzyme A carboxylase (ACC) complex. Biotin carboxylase (BC) catalyzes the carboxylation of biotin on its carrier protein (BCCP) and then the CO(2) group is transferred by the transcarboxylase to acetyl-CoA to form malonyl-CoA. The sequence is that of Acetyl-coenzyme A carboxylase carboxyl transferase subunit beta, chloroplastic from Populus alba (White poplar).